Consider the following 1082-residue polypeptide: Probable arabinosyltransferase B (1082 aa).

13 consecutive transmembrane segments (helical) span residues 28-50 (WVAT…LPVT), 223-241 (LAAM…LALW), 262-281 (VTAV…VIGA), 333-352 (SIWI…LLLS), 359-381 (LGPA…LGAW), 420-442 (AITT…AALL), 462-481 (WPLI…VVFA), 522-544 (AISR…FMML), 557-574 (AWRL…LMFT), 578-600 (WTHH…TVLV), 613-635 (AFLS…WWYV), 650-672 (GGVQ…AFWL), and 689-711 (APIP…IGVV).

This sequence belongs to the emb family.

The protein resides in the cell membrane. Functionally, arabinosyl transferase responsible for the polymerization of arabinose into the arabinan of arabinogalactan. The sequence is that of Probable arabinosyltransferase B (embB) from Mycolicibacterium smegmatis (Mycobacterium smegmatis).